The primary structure comprises 454 residues: Serine--tRNA ligase (454 aa).

247–249 (TAE) contacts L-serine. Residues 278–280 (RKE) and V294 each bind ATP. E301 lines the L-serine pocket. Residue 365 to 368 (ELAS) coordinates ATP. T400 serves as a coordination point for L-serine.

Belongs to the class-II aminoacyl-tRNA synthetase family. Type-1 seryl-tRNA synthetase subfamily. As to quaternary structure, homodimer. The tRNA molecule binds across the dimer.

It is found in the cytoplasm. It catalyses the reaction tRNA(Ser) + L-serine + ATP = L-seryl-tRNA(Ser) + AMP + diphosphate + H(+). The enzyme catalyses tRNA(Sec) + L-serine + ATP = L-seryl-tRNA(Sec) + AMP + diphosphate + H(+). The protein operates within aminoacyl-tRNA biosynthesis; selenocysteinyl-tRNA(Sec) biosynthesis; L-seryl-tRNA(Sec) from L-serine and tRNA(Sec): step 1/1. In terms of biological role, catalyzes the attachment of serine to tRNA(Ser). Is also able to aminoacylate tRNA(Sec) with serine, to form the misacylated tRNA L-seryl-tRNA(Sec), which will be further converted into selenocysteinyl-tRNA(Sec). The sequence is that of Serine--tRNA ligase from Pyrobaculum calidifontis (strain DSM 21063 / JCM 11548 / VA1).